Here is a 33-residue protein sequence, read N- to C-terminus: Ferredoxin (33 aa).

The 31-residue stretch at 3-33 (KYKVRLLSEAEGIDVTIDSADDVYILDAAEE) folds into the 2Fe-2S ferredoxin-type domain.

It belongs to the 2Fe2S plant-type ferredoxin family. The cofactor is [2Fe-2S] cluster.

The protein localises to the plastid. It localises to the chloroplast. Ferredoxins are iron-sulfur proteins that transfer electrons in a wide variety of metabolic reactions. This chain is Ferredoxin, found in Porphyridium aerugineum (Red microalga).